The primary structure comprises 98 residues: Small ribosomal subunit protein bS6 (98 aa).

Belongs to the bacterial ribosomal protein bS6 family.

In terms of biological role, binds together with bS18 to 16S ribosomal RNA. In Lacticaseibacillus paracasei (strain ATCC 334 / BCRC 17002 / CCUG 31169 / CIP 107868 / KCTC 3260 / NRRL B-441) (Lactobacillus paracasei), this protein is Small ribosomal subunit protein bS6.